Here is a 189-residue protein sequence, read N- to C-terminus: L-2,4-diaminobutyric acid acetyltransferase (189 aa).

Residues 32–183 form the N-acetyltransferase domain; sequence ITIGKPTVED…DDHEAELTFR (152 aa).

It belongs to the acetyltransferase family. EctA subfamily.

The enzyme catalyses L-2,4-diaminobutanoate + acetyl-CoA = (2S)-4-acetamido-2-aminobutanoate + CoA + H(+). It functions in the pathway amine and polyamine biosynthesis; ectoine biosynthesis; L-ectoine from L-aspartate 4-semialdehyde: step 2/3. Functionally, catalyzes the acetylation of L-2,4-diaminobutyrate (DABA) to gamma-N-acetyl-alpha,gamma-diaminobutyric acid (ADABA) with acetyl coenzyme A. In Halalkalibacterium halodurans (strain ATCC BAA-125 / DSM 18197 / FERM 7344 / JCM 9153 / C-125) (Bacillus halodurans), this protein is L-2,4-diaminobutyric acid acetyltransferase (ectA).